The following is a 71-amino-acid chain: ATP synthase F(0) complex subunit e, mitochondrial (71 aa).

Lys-34 carries the post-translational modification N6-acetyllysine. Ser-68 carries the phosphoserine modification.

The protein belongs to the ATPase e subunit family. In terms of assembly, component of the ATP synthase complex composed at least of ATP5F1A/subunit alpha, ATP5F1B/subunit beta, ATP5MC1/subunit c (homooctomer), MT-ATP6/subunit a, MT-ATP8/subunit 8, ATP5ME/subunit e, ATP5MF/subunit f, ATP5MG/subunit g, ATP5MK/subunit k, ATP5MJ/subunit j, ATP5F1C/subunit gamma, ATP5F1D/subunit delta, ATP5F1E/subunit epsilon, ATP5PF/subunit F6, ATP5PB/subunit b, ATP5PD/subunit d, ATP5PO/subunit OSCP. ATP synthase complex consists of a soluble F(1) head domain (subunits alpha(3) and beta(3)) - the catalytic core - and a membrane F(0) domain - the membrane proton channel (subunits c, a, 8, e, f, g, k and j). These two domains are linked by a central stalk (subunits gamma, delta, and epsilon) rotating inside the F1 region and a stationary peripheral stalk (subunits F6, b, d, and OSCP). Mammary gland, liver, kidney, heart, spleen, brain and lung.

Its subcellular location is the mitochondrion. The protein localises to the mitochondrion inner membrane. Its function is as follows. Subunit e, of the mitochondrial membrane ATP synthase complex (F(1)F(0) ATP synthase or Complex V) that produces ATP from ADP in the presence of a proton gradient across the membrane which is generated by electron transport complexes of the respiratory chain. ATP synthase complex consist of a soluble F(1) head domain - the catalytic core - and a membrane F(1) domain - the membrane proton channel. These two domains are linked by a central stalk rotating inside the F(1) region and a stationary peripheral stalk. During catalysis, ATP synthesis in the catalytic domain of F(1) is coupled via a rotary mechanism of the central stalk subunits to proton translocation. In vivo, can only synthesize ATP although its ATP hydrolase activity can be activated artificially in vitro. Part of the complex F(0) domain. This is ATP synthase F(0) complex subunit e, mitochondrial from Mus musculus (Mouse).